The chain runs to 452 residues: Caspase-2 (452 aa).

Position 2 is an N-acetylalanine (Ala-2). A propeptide spanning residues 2-169 is cleaved from the precursor; the sequence is AAPSAGSWST…TVEHSLDNKD (168 aa). Residues 32 to 121 enclose the CARD domain; that stretch reads MHPHHQETLK…GHLEDMLLTT (90 aa). Position 157 is a phosphoserine (Ser-157). Catalysis depends on residues His-277 and Cys-320. Positions 326-333 are excised as a propeptide; the sequence is DRGVDQQD. A compositionally biased stretch (basic and acidic residues) spans 327 to 336; it reads RGVDQQDGKN. Residues 327-354 form a disordered region; the sequence is RGVDQQDGKNHAGSPGCEESDAGKEKLP. Position 340 is a phosphoserine (Ser-340).

The protein belongs to the peptidase C14A family. In terms of assembly, heterotetramer that consists of two anti-parallel arranged heterodimers, each one formed by a p18 subunit and a p12 subunit. Forms a complex named the PIDDosome with PIDD1 and CRADD. Interacts with NOL3 (via CARD domain); inhibits CASP2 activity in a phosphorylation-dependent manner. In terms of processing, the mature protease can process its own propeptide, but not that of other caspases. In terms of tissue distribution, expressed at higher levels in the embryonic lung, liver and kidney than in the heart and brain. In adults, higher level expression is seen in the placenta, lung, kidney, and pancreas than in the heart, brain, liver and skeletal muscle.

The enzyme catalyses Strict requirement for an Asp residue at P1, with 316-Asp being essential for proteolytic activity and has a preferred cleavage sequence of Val-Asp-Val-Ala-Asp-|-.. In terms of biological role, is a regulator of the cascade of caspases responsible for apoptosis execution. Might function by either activating some proteins required for cell death or inactivating proteins necessary for cell survival. Associates with PIDD1 and CRADD to form the PIDDosome, a complex that activates CASP2 and triggers apoptosis in response to genotoxic stress. Acts as a positive regulator of apoptosis. Its function is as follows. Acts as a negative regulator of apoptosis. Functionally, may function as an endogenous apoptosis inhibitor that antagonizes caspase activation and cell death. The protein is Caspase-2 (CASP2) of Homo sapiens (Human).